Here is a 486-residue protein sequence, read N- to C-terminus: Serralysin (486 aa).

His-187 contributes to the Zn(2+) binding site. The active site involves Glu-188. Residues His-191 and His-197 each coordinate Zn(2+). The Ca(2+) site is built by Arg-266, Asp-269, Asp-298, Gly-300, Gly-301, Asp-303, Thr-340, and Glu-342. Hemolysin-type calcium-binding repeat units follow at residues Ile-345–Leu-362 and Lys-363–Leu-380.

This sequence belongs to the peptidase M10B family. Requires Zn(2+) as cofactor. Ca(2+) is required as a cofactor.

It localises to the secreted. The catalysed reaction is Preferential cleavage of bonds with hydrophobic residues in P1'.. The sequence is that of Serralysin (prtA1) from Photorhabdus luminescens (Xenorhabdus luminescens).